The primary structure comprises 254 residues: Pyruvate dehydrogenase complex repressor (254 aa).

The HTH gntR-type domain maps to 9 to 77 (PKLSDVIEQQ…QGGGTFVQSS (69 aa)). The segment at residues 37–56 (ERELAKQFDVSRPSLREAIQ) is a DNA-binding region (H-T-H motif).

Transcriptional repressor for the pyruvate dehydrogenase complex genes aceEF and lpd. The polypeptide is Pyruvate dehydrogenase complex repressor (pdhR) (Escherichia coli O6:H1 (strain CFT073 / ATCC 700928 / UPEC)).